We begin with the raw amino-acid sequence, 434 residues long: Galactofuranosyl glycosyltransferase (434 aa).

Residues 1–18 lie on the Cytoplasmic side of the membrane; that stretch reads MAPPRWHHDRRRMAIFVR. Residues 19 to 38 form a helical; Signal-anchor for type II membrane protein membrane-spanning segment; it reads VGLYTLLFLMGYVVPLIIFY. Asn-39, Asn-100, Asn-162, and Asn-388 each carry an N-linked (GlcNAc...) asparagine glycan. The Lumenal segment spans residues 39-434; it reads NRSRADTFED…KLLDFPVDPS (396 aa).

The protein belongs to the glycosyltransferase 2 family.

Its subcellular location is the endoplasmic reticulum membrane. The protein operates within glycolipid biosynthesis; glycosylphosphatidylinositol-anchor biosynthesis. In terms of biological role, glycosyltransferase that may be responsible for the addition of galactofuranosyl residues to the nascent lipophosphoglycan (LPG) chain. It could alternatively be involved in the synthesis of the galactofuranosyl donor. This is Galactofuranosyl glycosyltransferase (LPG1) from Leishmania donovani.